Reading from the N-terminus, the 311-residue chain is Formimidoylglutamase (311 aa).

Mn(2+)-binding residues include His-122, Asp-151, His-153, Asp-155, Cys-242, and Asp-244.

This sequence belongs to the arginase family. Requires Mn(2+) as cofactor.

It catalyses the reaction N-formimidoyl-L-glutamate + H2O = formamide + L-glutamate. It participates in amino-acid degradation; L-histidine degradation into L-glutamate; L-glutamate from N-formimidoyl-L-glutamate (hydrolase route): step 1/1. In terms of biological role, catalyzes the conversion of N-formimidoyl-L-glutamate to L-glutamate and formamide. The protein is Formimidoylglutamase of Pseudomonas aeruginosa (strain UCBPP-PA14).